Reading from the N-terminus, the 238-residue chain is Ribitol-5-phosphate cytidylyltransferase (238 aa).

CTP contacts are provided by residues 7–10 (LAGG) and 81–87 (GSDRNET).

It belongs to the IspD/TarI cytidylyltransferase family. TarI subfamily.

It catalyses the reaction D-ribitol 5-phosphate + CTP + H(+) = CDP-L-ribitol + diphosphate. The protein operates within cell wall biogenesis; poly(ribitol phosphate) teichoic acid biosynthesis. Catalyzes the transfer of the cytidylyl group of CTP to D-ribitol 5-phosphate. In Staphylococcus saprophyticus subsp. saprophyticus (strain ATCC 15305 / DSM 20229 / NCIMB 8711 / NCTC 7292 / S-41), this protein is Ribitol-5-phosphate cytidylyltransferase.